Here is a 526-residue protein sequence, read N- to C-terminus: Type 2 glycosyltransferase (526 aa).

A helical transmembrane segment spans residues 25 to 45 (PSFDFWYSSTFWLYLFLGLWF). Residues asparagine 298 and asparagine 317 are each glycosylated (N-linked (GlcNAc...) asparagine). 3 helical membrane-spanning segments follow: residues 340 to 360 (FATF…SCWW), 375 to 395 (WSQF…GLFI), and 403 to 423 (FLPV…YALI). N-linked (GlcNAc...) asparagine glycosylation is found at asparagine 426 and asparagine 517.

The protein belongs to the GT2 glycosyltransferase family.

Its subcellular location is the cell membrane. The protein localises to the secreted. It localises to the cell wall. In terms of biological role, glycosyltransferase involved in the maintenance of the outermost surface of the fungal cell wall. Likely functions in the synthesis of a currently unknown, potentially minor but widespread, extracellular or outer cell wall polysaccharide which plays a key role in facilitating many interactions between plants and fungi by enabling hyphal growth on solid matrices. This chain is Type 2 glycosyltransferase, found in Gibberella zeae (strain ATCC MYA-4620 / CBS 123657 / FGSC 9075 / NRRL 31084 / PH-1) (Wheat head blight fungus).